The following is a 562-amino-acid chain: Protoporphyrinogen oxidase 1, chloroplastic (562 aa).

The transit peptide at 1–48 directs the protein to the chloroplast; sequence MSAMALSSTMALSLPQSSMSLSHCRHNRITILIPSSSLRRRGGSSIRC. FAD-binding positions include 88–93, 115–116, and 137–140; these read GGGISG, EA, and GPNS. Residues 274–302 form a disordered region; it reads TLKTIQERKDNPKPPRDPRLPKPKGQTVG. The segment covering 278 to 293 has biased composition (basic and acidic residues); the sequence is IQERKDNPKPPRDPRL. FAD-binding positions include Val323 and 536–538; that span reads VAL.

The protein belongs to the protoporphyrinogen/coproporphyrinogen oxidase family. Protoporphyrinogen oxidase subfamily. The cofactor is FAD.

Its subcellular location is the plastid. The protein localises to the chloroplast thylakoid membrane. The protein resides in the chloroplast inner membrane. It carries out the reaction protoporphyrinogen IX + 3 O2 = protoporphyrin IX + 3 H2O2. Its pathway is porphyrin-containing compound metabolism; protoporphyrin-IX biosynthesis; protoporphyrin-IX from protoporphyrinogen-IX: step 1/1. It functions in the pathway porphyrin-containing compound metabolism; chlorophyll biosynthesis. Functionally, catalyzes the 6-electron oxidation of protoporphyrinogen-IX to form protoporphyrin-IX. The protein is Protoporphyrinogen oxidase 1, chloroplastic of Spinacia oleracea (Spinach).